Here is a 363-residue protein sequence, read N- to C-terminus: S-methylmethionine--homocysteine S-methyltransferase BHMT2 (363 aa).

The Hcy-binding domain maps to 11-305 (KVILERLDSG…YHIRAIAEEL (295 aa)). Positions 208, 290, and 291 each coordinate Zn(2+).

In terms of assembly, homotetramer. Requires Zn(2+) as cofactor.

The enzyme catalyses S-methyl-L-methionine + L-homocysteine = 2 L-methionine + H(+). It functions in the pathway amino-acid biosynthesis; L-methionine biosynthesis via de novo pathway; L-methionine from L-homocysteine (BhmT route): step 1/1. Functionally, involved in the regulation of homocysteine metabolism. Converts betaine and homocysteine to dimethylglycine and methionine, respectively. This reaction is also required for the irreversible oxidation of choline. In Rattus norvegicus (Rat), this protein is S-methylmethionine--homocysteine S-methyltransferase BHMT2 (Bhmt2).